Reading from the N-terminus, the 476-residue chain is 4-(hydroxymethyl)benzenesulfonate dehydrogenase TsaD1 (476 aa).

Residues 154 to 155 (WN), 178 to 181 (KAAE), and 230 to 231 (GS) contribute to the NAD(+) site. E252 (proton acceptor) is an active-site residue. L253 contacts NAD(+). The active-site Nucleophile is the C286. E380 serves as a coordination point for NAD(+).

The protein belongs to the aldehyde dehydrogenase family. In terms of assembly, homodimer.

The enzyme catalyses 4-(hydroxymethyl)benzenesulfonate + NAD(+) = 4-formylbenzenesulfonate + NADH + H(+). Functionally, involved in the toluene-4-sulfonate degradation pathway. Does not discriminate between the sulfonate and the carboxyl substituents and can also be involved in the p-toluenecarboxylate degradation pathway. This is 4-(hydroxymethyl)benzenesulfonate dehydrogenase TsaD1 (tsaD1) from Comamonas testosteroni (Pseudomonas testosteroni).